We begin with the raw amino-acid sequence, 3326 residues long: Protein unc-80 homolog (3326 aa).

Polar residues predominate over residues 152-164 (IENQGSPGQPCRS). 4 disordered regions span residues 152–178 (IENQ…RKTF), 243–267 (KRSS…QQGE), 283–317 (PKAT…RASL), and 450–469 (RKED…GKRR). The residue at position 257 (Ser257) is a Phosphoserine. Over residues 283-308 (PKATISGCHQGNSFDGSLSSQTSQER) the composition is skewed to polar residues. Position 526 is a phosphoserine (Ser526). 5 disordered regions span residues 536–560 (LSAR…SHGE), 697–785 (RKKS…DNIP), 967–1076 (GKKV…SRRI), 1405–1430 (EDSK…KKVP), and 1469–1516 (SSKL…LSNA). Composition is skewed to basic and acidic residues over residues 551 to 560 (LPDHSNSHGE) and 699 to 713 (KSEN…KRPS). The segment covering 723–737 (SSSSTSGFGAPSASG) has biased composition (low complexity). Residues 738–770 (AGDGGGEEGGGGDGGGGGGGGDGGGGGGGGGGP) are compositionally biased toward gly residues. Residues 772–783 (EKNEKNQEKDDN) are compositionally biased toward basic and acidic residues. Over residues 1038-1055 (SQSAASDTSSQSEQDTSE) the composition is skewed to low complexity. Over residues 1418 to 1429 (IKSDAGAEEKKV) the composition is skewed to basic and acidic residues. 2 helical membrane passes run 2336–2356 (PFVL…DAAN) and 2466–2486 (IAAT…VEVL). Residues 2493-2515 (PQMSRSDQGHKGTTTANHTMSSG) form a disordered region. 2 helical membrane passes run 2853–2873 (GLAE…LVCF) and 2899–2919 (LALW…FVLL). Positions 3010–3032 (NTGTGTVWEQDSEPSQQASQDTL) are enriched in polar residues. Residues 3010 to 3052 (NTGTGTVWEQDSEPSQQASQDTLSRTDEEDEENDSVSMPSVVS) form a disordered region. Residue Ser3110 is modified to Phosphoserine. Disordered stretches follow at residues 3122–3222 (LQQP…VLTS), 3236–3271 (PKQS…LSDP), and 3296–3326 (NGTE…ESHV). Positions 3127 to 3136 (GRKRGLRQLR) are enriched in basic residues. The segment covering 3157 to 3168 (LSTTRRSIQPKT) has biased composition (polar residues). Residues 3298 to 3309 (TENPLLSSQFTF) show a composition bias toward polar residues. Residues 3315–3326 (GDTDSALDESHV) are compositionally biased toward acidic residues.

It belongs to the unc-80 family. As to quaternary structure, NALCN complex consists of NALCN and auxiliary subunits, UNC79, UNC80 and NACL1. These auxiliary subunits are essential for the NALCN complex function. Interacts (via N-terminus half) with NALCN; this interaction facilitates NALCN surface localization. Interacts (via C-terminus) with UNC79. UNC80 bridges NALCN to UNC79. Post-translationally, phosphorylated on tyrosine residues. In terms of tissue distribution, expressed almost exclusively in the brain. Expressed in hippocampus and ventral tegmental area neurons.

Its subcellular location is the cell membrane. It localises to the cell projection. It is found in the dendrite. Functionally, auxiliary subunit of the NALCN sodium channel complex. The NALCN sodium channel complex is a voltage-gated ion channel responsible for the resting Na(+) permeability that controls neuronal excitability. This complex is activated by neuropeptides substance P, neurotensin. In addition, the channel is inhibited by extracellular Ca(2+) through the Ca(2+)-sensing receptor. UNC80 is essential for NALCN sensitivity to extracellular calcium. This Mus musculus (Mouse) protein is Protein unc-80 homolog (Unc80).